Here is a 114-residue protein sequence, read N- to C-terminus: T cell receptor beta variable 6-2 (114 aa).

Residues 1–21 (MSLGLLCCGAFSLLWAGPVNA) form the signal peptide. One can recognise an Ig-like domain in the interval 22–114 (GVTQTPKFRV…TSVYFCASSY (93 aa)). A disulfide bridge links C42 with C110. N-linked (GlcNAc...) asparagine glycosylation is present at N84.

As to quaternary structure, alpha-beta TR is a heterodimer composed of an alpha and beta chain; disulfide-linked. The alpha-beta TR is associated with the transmembrane signaling CD3 coreceptor proteins to form the TR-CD3 (TcR or TCR). The assembly of alpha-beta TR heterodimers with CD3 occurs in the endoplasmic reticulum where a single alpha-beta TR heterodimer associates with one CD3D-CD3E heterodimer, one CD3G-CD3E heterodimer and one CD247 homodimer forming a stable octameric structure. CD3D-CD3E and CD3G-CD3E heterodimers preferentially associate with TR alpha and TR beta chains, respectively. The association of the CD247 homodimer is the last step of TcR assembly in the endoplasmic reticulum and is required for transport to the cell surface.

It is found in the cell membrane. In terms of biological role, v region of the variable domain of T cell receptor (TR) beta chain that participates in the antigen recognition. Alpha-beta T cell receptors are antigen specific receptors which are essential to the immune response and are present on the cell surface of T lymphocytes. Recognize peptide-major histocompatibility (MH) (pMH) complexes that are displayed by antigen presenting cells (APC), a prerequisite for efficient T cell adaptive immunity against pathogens. Binding of alpha-beta TR to pMH complex initiates TR-CD3 clustering on the cell surface and intracellular activation of LCK that phosphorylates the ITAM motifs of CD3G, CD3D, CD3E and CD247 enabling the recruitment of ZAP70. In turn ZAP70 phosphorylates LAT, which recruits numerous signaling molecules to form the LAT signalosome. The LAT signalosome propagates signal branching to three major signaling pathways, the calcium, the mitogen-activated protein kinase (MAPK) kinase and the nuclear factor NF-kappa-B (NF-kB) pathways, leading to the mobilization of transcription factors that are critical for gene expression and essential for T cell growth and differentiation. The T cell repertoire is generated in the thymus, by V-(D)-J rearrangement. This repertoire is then shaped by intrathymic selection events to generate a peripheral T cell pool of self-MH restricted, non-autoaggressive T cells. Post-thymic interaction of alpha-beta TR with the pMH complexes shapes TR structural and functional avidity. In Homo sapiens (Human), this protein is T cell receptor beta variable 6-2.